The primary structure comprises 244 residues: 14-3-3 protein beta/alpha-A (244 aa).

At Met1 the chain carries N-acetylmethionine.

The protein belongs to the 14-3-3 family. In terms of assembly, homodimer, and heterodimer with other family members.

It localises to the cytoplasm. Its function is as follows. Adapter protein implicated in the regulation of a large spectrum of both general and specialized signaling pathways. Binds to a large number of partners, usually by recognition of a phosphoserine or phosphothreonine motif. Binding generally results in the modulation of the activity of the binding partner. In Xenopus laevis (African clawed frog), this protein is 14-3-3 protein beta/alpha-A (ywhab-a).